A 355-amino-acid polypeptide reads, in one-letter code: MSAPVRIAIDAMGGDHGPEVVLPGVELARVRHPDTSFLLFGDEAAIRPILARYPALSTASRIIHTDVVVGMDDKPSQALRRGRYKSSMWRCIDAVKAGEADAAVSAGNTGALMAMAKVNLRTMPGIGRPAIAAIWPTLRGESIVLDVGASIGATSQSLIEMAIMGSAMASTVFDIERPTVGLLNVGVEEVKGVEEVKEAGRILREEGVAGVNYFGFVEGNDIGSGTVDVVVTEGFSGNIALKTAEGTAKQIASYLRAALSRTWRAKLGYLLARDAFAALREKLDPRRSNGGVFLGLNGVVIKSHGGTDAEGFAAAVDLGYDMVRHRLLERIEKSIVTRLPAAGRGSEPVEAEGSS.

Belongs to the PlsX family. As to quaternary structure, homodimer. Probably interacts with PlsY.

It is found in the cytoplasm. It carries out the reaction a fatty acyl-[ACP] + phosphate = an acyl phosphate + holo-[ACP]. Its pathway is lipid metabolism; phospholipid metabolism. Functionally, catalyzes the reversible formation of acyl-phosphate (acyl-PO(4)) from acyl-[acyl-carrier-protein] (acyl-ACP). This enzyme utilizes acyl-ACP as fatty acyl donor, but not acyl-CoA. In Azorhizobium caulinodans (strain ATCC 43989 / DSM 5975 / JCM 20966 / LMG 6465 / NBRC 14845 / NCIMB 13405 / ORS 571), this protein is Phosphate acyltransferase.